Consider the following 409-residue polypeptide: Snake venom metalloproteinase BITM02A (409 aa).

An N-terminal signal peptide occupies residues 1–20 (MIEVLLVTICLAAFPYQGSS). The propeptide occupies 21-189 (IILESGNVND…KKASQSNLTP (169 aa)). Residues 193-389 (RYIELFIVVD…ENPQCILNKR (197 aa)) form the Peptidase M12B domain. Positions 196 and 280 each coordinate Ca(2+). 3 cysteine pairs are disulfide-bonded: cysteine 304–cysteine 384, cysteine 344–cysteine 368, and cysteine 346–cysteine 351. Zn(2+) is bound at residue histidine 329. Residue glutamate 330 is part of the active site. Histidine 333 and histidine 339 together coordinate Zn(2+). Residues cysteine 384, asparagine 387, valine 399, asparagine 402, leucine 404, glutamate 406, and glutamate 409 each coordinate Ca(2+). The propeptide occupies 390-409 (LRTDTVSTPVSGNELLEAGE).

It belongs to the venom metalloproteinase (M12B) family. P-I subfamily. Monomer. Zn(2+) is required as a cofactor. In terms of tissue distribution, expressed by the venom gland.

It localises to the secreted. Its function is as follows. Snake venom metalloproteinase that impairs hemostasis in the envenomed animal. In Bothrops insularis (Golden lancehead), this protein is Snake venom metalloproteinase BITM02A.